Here is a 117-residue protein sequence, read N- to C-terminus: Large ribosomal subunit protein bL20c (117 aa).

It belongs to the bacterial ribosomal protein bL20 family.

It is found in the plastid. Its subcellular location is the chloroplast. Binds directly to 23S ribosomal RNA and is necessary for the in vitro assembly process of the 50S ribosomal subunit. It is not involved in the protein synthesizing functions of that subunit. The polypeptide is Large ribosomal subunit protein bL20c (Ceratophyllum demersum (Rigid hornwort)).